The sequence spans 504 residues: L-carnitine/gamma-butyrobetaine antiporter (504 aa).

12 consecutive transmembrane segments (helical) span residues 10-30 (IEPK…WLTV), 51-71 (WGWA…WLVF), 92-112 (IFMM…SIEI), 143-163 (GPLP…FFFV), 195-215 (FYLV…TPLV), 231-251 (LDAI…ACGL), 263-283 (SYLS…SFIM), 316-336 (WTVF…IFLA), 347-367 (LCFG…TVLG), 398-418 (WAAL…CFIA), 446-466 (LLVR…LLAL), and 475-495 (AIIA…LSFI).

Belongs to the BCCT transporter (TC 2.A.15) family. CaiT subfamily. Homotrimer.

The protein localises to the cell inner membrane. The catalysed reaction is 4-(trimethylamino)butanoate(in) + (R)-carnitine(out) = 4-(trimethylamino)butanoate(out) + (R)-carnitine(in). The protein operates within amine and polyamine metabolism; carnitine metabolism. Catalyzes the exchange of L-carnitine for gamma-butyrobetaine. This is L-carnitine/gamma-butyrobetaine antiporter from Shigella flexneri serotype 5b (strain 8401).